An 863-amino-acid polypeptide reads, in one-letter code: Oleate activated transcription factor 3 (863 aa).

A DNA-binding region (zn(2)-C6 fungal-type) is located at residues Cys19 to Cys47. Positions Asp52–Leu63 are enriched in polar residues. A disordered region spans residues Asp52–Pro81.

Belongs to the OAF3 family.

Its subcellular location is the cytoplasm. The protein localises to the nucleus. The protein resides in the mitochondrion. Transcriptional inhibitor with a significantly increased number of target genes in response to oleate. The chain is Oleate activated transcription factor 3 (OAF3) from Saccharomyces cerevisiae (strain RM11-1a) (Baker's yeast).